Here is a 110-residue protein sequence, read N- to C-terminus: Nitrogenase-stabilizing/protective protein NifW (110 aa).

It belongs to the NifW family. Homotrimer; associates with NifD.

May protect the nitrogenase Fe-Mo protein from oxidative damage. The protein is Nitrogenase-stabilizing/protective protein NifW of Acidithiobacillus ferrooxidans (strain ATCC 23270 / DSM 14882 / CIP 104768 / NCIMB 8455) (Ferrobacillus ferrooxidans (strain ATCC 23270)).